The chain runs to 252 residues: Hsp70-Hsp90 organising protein (252 aa).

3 TPR repeats span residues 7 to 40, 41 to 74, and 75 to 108; these read AQRLKELGNKCFQEGKYEEAVKYFSDAITNDPLD, HVLYSNLSGAFASLGRFYEALESANKCISIKKDW, and PKGYIRKGCAEHGLRQLSNAEKTYLEGLKIDPNN. The stretch at 197 to 239 forms a coiled coil; sequence EGNDAEERQRQQREEEERRKKKEEEERKKKEEEEMKKQNRTPE. The interval 199 to 252 is disordered; sequence NDAEERQRQQREEEERRKKKEEEERKKKEEEEMKKQNRTPEQIQGDEHKLKVMN. 2 stretches are compositionally biased toward basic and acidic residues: residues 201–233 and 243–252; these read AEERQRQQREEEERRKKKEEEERKKKEEEEMKK and GDEHKLKVMN.

As to quaternary structure, monomer. Homodimer. Forms a complex composed of HOP and chaperones HSP70 and HSP90; the interaction is stronger in the absence of ATP. Interacts (via TPR 1, 2, 3, 7, 8 and 9 repeats) with HSP70 (via C-terminus); the interaction is direct and is stronger in the absence of ATP. Interacts (via TPR 4, 5 and 6 repeats) with HSP90 (via C-terminus); the interaction is direct.

It is found in the cytoplasm. Its function is as follows. Acts as a co-chaperone and mediates the association of the chaperones HSP70 and HSP90 probably facilitating substrate transfer from HSP70 to HSP90. Stimulates HSP70 ATPase activity and, in contrast, inhibits HSP90 ATPase activity. In Plasmodium falciparum, this protein is Hsp70-Hsp90 organising protein.